Consider the following 420-residue polypeptide: Serine hydroxymethyltransferase (420 aa).

(6S)-5,6,7,8-tetrahydrofolate is bound by residues L121 and 125–127 (GHL). N6-(pyridoxal phosphate)lysine is present on K230. (6S)-5,6,7,8-tetrahydrofolate contacts are provided by residues E246 and 354-356 (SPF).

Belongs to the SHMT family. Homodimer. The cofactor is pyridoxal 5'-phosphate.

Its subcellular location is the cytoplasm. The enzyme catalyses (6R)-5,10-methylene-5,6,7,8-tetrahydrofolate + glycine + H2O = (6S)-5,6,7,8-tetrahydrofolate + L-serine. It participates in one-carbon metabolism; tetrahydrofolate interconversion. The protein operates within amino-acid biosynthesis; glycine biosynthesis; glycine from L-serine: step 1/1. In terms of biological role, catalyzes the reversible interconversion of serine and glycine with tetrahydrofolate (THF) serving as the one-carbon carrier. This reaction serves as the major source of one-carbon groups required for the biosynthesis of purines, thymidylate, methionine, and other important biomolecules. Also exhibits THF-independent aldolase activity toward beta-hydroxyamino acids, producing glycine and aldehydes, via a retro-aldol mechanism. In Rickettsia prowazekii (strain Madrid E), this protein is Serine hydroxymethyltransferase.